The following is a 1157-amino-acid chain: uncharacterized protein (1157 aa).

Over residues 1–10 the composition is skewed to basic and acidic residues; that stretch reads MDPHWKRHDS. Disordered stretches follow at residues 1–35, 159–233, and 478–498; these read MDPH…QRFG, QTTP…SVEP, and KNQS…GKGP. Low complexity-rich tracts occupy residues 18–31 and 181–197; these read SPSA…PSSA and SAGT…NPNF. Residues 208–228 show a composition bias toward polar residues; that stretch reads QEWQQSPLESPLSMHSLQESL. Residues 501–574 form the CSD2 domain; sequence VWFKPSDKRI…KVEYKAILHD (74 aa). The RNB domain maps to 608–921; it reads LRDKLTFMIG…ICVQRQLREA (314 aa). Residues 973-1030 enclose the DIS3L2 C-terminal domain; sequence GLVKHKAFVLAVDQEYIDIVIYEFGLERRISLDLLPLSNCDFNEQKHELYLSWRTNAS. Residues 1084–1113 form a disordered region; that stretch reads YSKARGNDSTSKTAKSSSGNQDISGDGKLH. The span at 1090–1106 shows a compositional bias: polar residues; it reads NDSTSKTAKSSSGNQDI.

Belongs to the RNR ribonuclease family.

It localises to the cytoplasm. This is an uncharacterized protein from Schizosaccharomyces pombe (strain 972 / ATCC 24843) (Fission yeast).